The chain runs to 309 residues: Elongation factor Ts (309 aa).

The involved in Mg(2+) ion dislocation from EF-Tu stretch occupies residues 82-85 (TDFV).

The protein belongs to the EF-Ts family.

It localises to the cytoplasm. Its function is as follows. Associates with the EF-Tu.GDP complex and induces the exchange of GDP to GTP. It remains bound to the aminoacyl-tRNA.EF-Tu.GTP complex up to the GTP hydrolysis stage on the ribosome. The protein is Elongation factor Ts of Rickettsia felis (strain ATCC VR-1525 / URRWXCal2) (Rickettsia azadi).